A 210-amino-acid polypeptide reads, in one-letter code: SAP domain-containing ribonucleoprotein (210 aa).

At alanine 2 the chain carries N-acetylalanine. An SAP domain is found at 8–42; the sequence is LHKLKLAELKQECLARGLETKGIKQDLINRLQAYL. N6-acetyllysine is present on lysine 10. Acidic residues predominate over residues 45–64; the sequence is HAEEEANEEDVLGDETEEEE. Positions 45-87 are disordered; the sequence is HAEEEANEEDVLGDETEEEEPKPIELPVKEEEPPEKVVDMASE. The segment covering 65–87 has biased composition (basic and acidic residues); sequence PKPIELPVKEEEPPEKVVDMASE. Position 142 is an N6-acetyllysine (lysine 142). A disordered region spans residues 161–210; that stretch reads VSSISRKSEDDEKLKKRKERFGIVTSSAGTGTTEDTEAKKRKRAERFGIA. Serine 163 bears the Phosphoserine mark. The segment covering 184 to 193 has biased composition (polar residues); sequence VTSSAGTGTT.

It belongs to the SAP domain-containing ribonucleoprotein family. Interacts with DDX39A. Interacts with FUS. Interacts (via the C-terminal domain) with DDX39B; the interaction is direct and facilitates RNA binding of DDX39B. Component of the transcription/export (TREX) complex at least composed of ALYREF/THOC4, DDX39B, SARNP/CIP29, CHTOP and the THO subcomplex; TREX seems to have dynamic structure involving ATP-dependent remodeling; in the complex interacts directly with DDX39B in a ATP-dependent manner which bridges it to ALYREF/THOC4.

It is found in the nucleus. The protein resides in the nucleus speckle. In terms of biological role, binds both single-stranded and double-stranded DNA with higher affinity for the single-stranded form. Specifically binds to scaffold/matrix attachment region DNA. Also binds single-stranded RNA. Enhances RNA unwinding activity of DDX39A. May participate in important transcriptional or translational control of cell growth, metabolism and carcinogenesis. Component of the TREX complex which is thought to couple mRNA transcription, processing and nuclear export, and specifically associates with spliced mRNA and not with unspliced pre-mRNA. The TREX complex is recruited to spliced mRNAs by a transcription-independent mechanism, binds to mRNA upstream of the exon-junction complex (EJC) and is recruited in a splicing- and cap-dependent manner to a region near the 5' end of the mRNA where it functions in mRNA export to the cytoplasm via the TAP/NXF1 pathway. Associates with DDX39B, which facilitates RNA binding of DDX39B and likely plays a role in mRNA export. This chain is SAP domain-containing ribonucleoprotein (Sarnp), found in Rattus norvegicus (Rat).